A 90-amino-acid chain; its full sequence is Conotoxin Mr22.1 (90 aa).

A signal peptide spans methionine 1–glycine 18. Positions tryptophan 19–arginine 49 are excised as a propeptide. Tryptophan 75 carries the post-translational modification 6'-bromotryptophan.

It belongs to the E superfamily. In terms of processing, contains 4 disulfide bonds. As to expression, expressed by the venom duct.

The protein localises to the secreted. The protein is Conotoxin Mr22.1 of Conus marmoreus (Marble cone).